A 383-amino-acid chain; its full sequence is F-box/kelch-repeat protein At1g16250 (383 aa).

The F-box domain maps to 7–54 (SIIPGLPDDLALRCIAKLSHGYHGVLECVSRGWRDLVRGADYSCYKAR). 5 Kelch repeats span residues 50–103 (CYKA…GFAC), 109–165 (CLLV…SVSG), 166–214 (KVYV…SYRG), 216–263 (FHVL…VMKN), and 318–377 (ELYV…CVSL).

The chain is F-box/kelch-repeat protein At1g16250 from Arabidopsis thaliana (Mouse-ear cress).